A 78-amino-acid polypeptide reads, in one-letter code: Large ribosomal subunit protein eL20 (78 aa).

This sequence belongs to the eukaryotic ribosomal protein eL20 family. In terms of assembly, part of the 50S ribosomal subunit. Binds 23S rRNA.

The protein is Large ribosomal subunit protein eL20 of Pyrobaculum neutrophilum (strain DSM 2338 / JCM 9278 / NBRC 100436 / V24Sta) (Thermoproteus neutrophilus).